Consider the following 82-residue polypeptide: Small ribosomal subunit protein bS16 (82 aa).

The protein belongs to the bacterial ribosomal protein bS16 family.

In Pectobacterium atrosepticum (strain SCRI 1043 / ATCC BAA-672) (Erwinia carotovora subsp. atroseptica), this protein is Small ribosomal subunit protein bS16.